The primary structure comprises 371 residues: Glutamate 5-kinase 2 (371 aa).

Position 13 (lysine 13) interacts with ATP. The substrate site is built by serine 53, aspartate 140, and asparagine 152. ATP is bound by residues 172–173 (SD) and 214–220 (TGGMRSK). Residues 280 to 356 (EGEMILSDDC…KELTNRALID (77 aa)) form the PUA domain.

Belongs to the glutamate 5-kinase family.

It is found in the cytoplasm. The catalysed reaction is L-glutamate + ATP = L-glutamyl 5-phosphate + ADP. It functions in the pathway amino-acid biosynthesis; L-proline biosynthesis; L-glutamate 5-semialdehyde from L-glutamate: step 1/2. Catalyzes the transfer of a phosphate group to glutamate to form L-glutamate 5-phosphate. The protein is Glutamate 5-kinase 2 (proJ) of Bacillus subtilis (strain 168).